The following is a 101-amino-acid chain: Small ribosomal subunit protein uS14 (101 aa).

It belongs to the universal ribosomal protein uS14 family. Part of the 30S ribosomal subunit. Contacts proteins S3 and S10.

Binds 16S rRNA, required for the assembly of 30S particles and may also be responsible for determining the conformation of the 16S rRNA at the A site. This is Small ribosomal subunit protein uS14 from Hyphomonas neptunium (strain ATCC 15444).